A 692-amino-acid polypeptide reads, in one-letter code: Elongation factor G (692 aa).

One can recognise a tr-type G domain in the interval E8–T282. GTP is bound by residues A17–T24, D81–H85, and N135–D138.

It belongs to the TRAFAC class translation factor GTPase superfamily. Classic translation factor GTPase family. EF-G/EF-2 subfamily.

The protein localises to the cytoplasm. Functionally, catalyzes the GTP-dependent ribosomal translocation step during translation elongation. During this step, the ribosome changes from the pre-translocational (PRE) to the post-translocational (POST) state as the newly formed A-site-bound peptidyl-tRNA and P-site-bound deacylated tRNA move to the P and E sites, respectively. Catalyzes the coordinated movement of the two tRNA molecules, the mRNA and conformational changes in the ribosome. This chain is Elongation factor G, found in Moorella thermoacetica (strain ATCC 39073 / JCM 9320).